The sequence spans 154 residues: Myoglobin (154 aa).

Residues 2-148 (GLSDGEWHLV…FRNDIAAKIK (147 aa)) enclose the Globin domain. The residue at position 4 (S4) is a Phosphoserine. H65 contacts nitrite. O2 is bound at residue H65. Position 68 is a phosphothreonine (T68). H94 provides a ligand contact to heme b.

It belongs to the globin family. As to quaternary structure, monomeric.

It is found in the cytoplasm. The protein resides in the sarcoplasm. The enzyme catalyses Fe(III)-heme b-[protein] + nitric oxide + H2O = Fe(II)-heme b-[protein] + nitrite + 2 H(+). It catalyses the reaction H2O2 + AH2 = A + 2 H2O. Its function is as follows. Monomeric heme protein which primary function is to store oxygen and facilitate its diffusion within muscle tissues. Reversibly binds oxygen through a pentacoordinated heme iron and enables its timely and efficient release as needed during periods of heightened demand. Depending on the oxidative conditions of tissues and cells, and in addition to its ability to bind oxygen, it also has a nitrite reductase activity whereby it regulates the production of bioactive nitric oxide. Under stress conditions, like hypoxia and anoxia, it also protects cells against reactive oxygen species thanks to its pseudoperoxidase activity. In Pusa sibirica (Baikal seal), this protein is Myoglobin (MB).